Reading from the N-terminus, the 486-residue chain is Inosine-5'-monophosphate dehydrogenase (486 aa).

CBS domains lie at 99–154 and 156–215; these read IVED…LVKE and MTKE…VRDE. Residues Asp247 and 294–296 each bind NAD(+); that span reads GIG. K(+) is bound by residues Gly296 and Gly298. Position 299 (Ser299) interacts with IMP. Cys301 is a binding site for K(+). The Thioimidate intermediate role is filled by Cys301. IMP-binding positions include 334-336, 357-358, and 381-385; these read DGG, GN, and YRGMG. Arg397 acts as the Proton acceptor in catalysis. Residue Glu412 participates in IMP binding. K(+) is bound by residues Glu466, Ser467, and His468.

This sequence belongs to the IMPDH/GMPR family. In terms of assembly, homotetramer. K(+) serves as cofactor.

The catalysed reaction is IMP + NAD(+) + H2O = XMP + NADH + H(+). It functions in the pathway purine metabolism; XMP biosynthesis via de novo pathway; XMP from IMP: step 1/1. Mycophenolic acid (MPA) is a non-competitive inhibitor that prevents formation of the closed enzyme conformation by binding to the same site as the amobile flap. In contrast, mizoribine monophosphate (MZP) is a competitive inhibitor that induces the closed conformation. MPA is a potent inhibitor of mammalian IMPDHs but a poor inhibitor of the bacterial enzymes. MZP is a more potent inhibitor of bacterial IMPDH. In terms of biological role, catalyzes the conversion of inosine 5'-phosphate (IMP) to xanthosine 5'-phosphate (XMP), the first committed and rate-limiting step in the de novo synthesis of guanine nucleotides, and therefore plays an important role in the regulation of cell growth. The polypeptide is Inosine-5'-monophosphate dehydrogenase (Pyrococcus horikoshii (strain ATCC 700860 / DSM 12428 / JCM 9974 / NBRC 100139 / OT-3)).